The sequence spans 328 residues: MAWPLVGAFLCGHLLGFVCLSGLAVEVTVPTEPLSVPKGKTAELSCSYKTSVGDNFALEWSFVQPGKPISASVPVLYFTNGHLYPTGSKADRAILLHDPPTGGLATLKLTDLRPSDTGTYLCNVNNPPDFYTNGLGLINLTVLVPPSHPLCSQSGQTSVGGSAALGCRSSEGAPKPVYNWERLGSSPTPPPGSMVQDEVSGQLILTNLSLTSSGTYRCVASNQMGSASCELNLSVTDSSEGRVAGTLIGVLLGVLLLSVAAFCLIRFQKERKKEPKETYGGSDLREDATAPGVFEQASMRADHSKELLEKSPCASTMTTTKSKLSMVV.

Positions 1 to 24 (MAWPLVGAFLCGHLLGFVCLSGLA) are cleaved as a signal peptide. The Ig-like V-type domain maps to 25-138 (VEVTVPTEPL…DFYTNGLGLI (114 aa)). At 25–244 (VEVTVPTEPL…VTDSSEGRVA (220 aa)) the chain is on the extracellular side. Cys46 and Cys122 are oxidised to a cystine. N-linked (GlcNAc...) asparagine glycosylation is found at Asn139, Asn207, and Asn232. The region spanning 145-234 (PPSHPLCSQS…GSASCELNLS (90 aa)) is the Ig-like C2-type domain. Cys167 and Cys218 are oxidised to a cystine. A helical transmembrane segment spans residues 245–265 (GTLIGVLLGVLLLSVAAFCLI). The Cytoplasmic portion of the chain corresponds to 266-328 (RFQKERKKEP…TTKSKLSMVV (63 aa)).

As to expression, expressed in the stomach, colon and prostate.

The protein resides in the membrane. The polypeptide is V-set and immunoglobulin domain-containing protein 2 (Vsig2) (Mus musculus (Mouse)).